The primary structure comprises 553 residues: MTSAPIPDITATPAWDALRRHHDQIGNTHLRQFFADDPGRGRELTVSVGDLYIDYSKHRVTRETLALLIDLARTAHLEERRDQMFAGVHINTSEDRAVLHTALRLPRDAELVVDGQDVVTDVHAVLDAMGAFTDRLRSGEWTGATGKRISTVVNIGIGGSDLGPVMVYQALRHYADAGISARFVSNVDPADLIATLADLDPATTLFIVASKTFSTLETLTNATAARRWLTDALGDAAVSRHFVAVSTNKRLVDDFGINTDNMFGFWDWVGGRYSVDSAIGLSLMTVIGRDAFADFLAGFHIIDRHFATAPLESNAPVLLGLIGLWYSNFFGAQSRTVLPYSNDLSRFPAYLQQLTMESNGKSTRADGSPVSADTGEIFWGEPGTNGQHAFYQLLHQGTRLVPADFIGFAQPLDDLPTAEGTGSMHDLLMSNFFAQTQVLAFGKTAEEIAADGTPAHVVAHKVMPGNRPSTSILASRLTPSVLGQLIALYEHQVFTEGVVWGIDSFDQWGVELGKTQAKALLPVITGAGSPPPQSDSSTDGLVRRYRTERGRAG.

Glu-357 functions as the Proton donor in the catalytic mechanism. Catalysis depends on residues His-388 and Lys-514. A disordered region spans residues 524-553 (ITGAGSPPPQSDSSTDGLVRRYRTERGRAG). The span at 541–553 (LVRRYRTERGRAG) shows a compositional bias: basic and acidic residues.

Belongs to the GPI family.

It is found in the cytoplasm. The enzyme catalyses alpha-D-glucose 6-phosphate = beta-D-fructose 6-phosphate. Its pathway is carbohydrate biosynthesis; gluconeogenesis. It functions in the pathway carbohydrate degradation; glycolysis; D-glyceraldehyde 3-phosphate and glycerone phosphate from D-glucose: step 2/4. Its function is as follows. Catalyzes the reversible isomerization of glucose-6-phosphate to fructose-6-phosphate. This chain is Glucose-6-phosphate isomerase, found in Mycobacterium bovis (strain BCG / Tokyo 172 / ATCC 35737 / TMC 1019).